The following is a 346-amino-acid chain: Holliday junction branch migration complex subunit RuvB (346 aa).

Positions 4-185 (SDRIITASPF…FGIVSRLEFY (182 aa)) are large ATPase domain (RuvB-L). ATP contacts are provided by residues L24, R25, G66, K69, T70, T71, 132-134 (EDY), R175, Y185, and R222. T70 is a Mg(2+) binding site. Residues 186–256 (TSDELSKIVT…VADAALQMLD (71 aa)) form a small ATPAse domain (RuvB-S) region. Residues 259 to 346 (AAGLDVLDRK…AATPGLFNPD (88 aa)) form a head domain (RuvB-H) region. Residues R295, R314, and R319 each contribute to the DNA site.

It belongs to the RuvB family. Homohexamer. Forms an RuvA(8)-RuvB(12)-Holliday junction (HJ) complex. HJ DNA is sandwiched between 2 RuvA tetramers; dsDNA enters through RuvA and exits via RuvB. An RuvB hexamer assembles on each DNA strand where it exits the tetramer. Each RuvB hexamer is contacted by two RuvA subunits (via domain III) on 2 adjacent RuvB subunits; this complex drives branch migration. In the full resolvosome a probable DNA-RuvA(4)-RuvB(12)-RuvC(2) complex forms which resolves the HJ.

Its subcellular location is the cytoplasm. It carries out the reaction ATP + H2O = ADP + phosphate + H(+). Functionally, the RuvA-RuvB-RuvC complex processes Holliday junction (HJ) DNA during genetic recombination and DNA repair, while the RuvA-RuvB complex plays an important role in the rescue of blocked DNA replication forks via replication fork reversal (RFR). RuvA specifically binds to HJ cruciform DNA, conferring on it an open structure. The RuvB hexamer acts as an ATP-dependent pump, pulling dsDNA into and through the RuvAB complex. RuvB forms 2 homohexamers on either side of HJ DNA bound by 1 or 2 RuvA tetramers; 4 subunits per hexamer contact DNA at a time. Coordinated motions by a converter formed by DNA-disengaged RuvB subunits stimulates ATP hydrolysis and nucleotide exchange. Immobilization of the converter enables RuvB to convert the ATP-contained energy into a lever motion, pulling 2 nucleotides of DNA out of the RuvA tetramer per ATP hydrolyzed, thus driving DNA branch migration. The RuvB motors rotate together with the DNA substrate, which together with the progressing nucleotide cycle form the mechanistic basis for DNA recombination by continuous HJ branch migration. Branch migration allows RuvC to scan DNA until it finds its consensus sequence, where it cleaves and resolves cruciform DNA. This Nitrosomonas eutropha (strain DSM 101675 / C91 / Nm57) protein is Holliday junction branch migration complex subunit RuvB.